The chain runs to 227 residues: Class I hydrophobin 4 (227 aa).

A signal peptide spans 1–18 (MQFTTFALLAVAAATASA). Intrachain disulfides connect C159–C207, C167–C200, C168–C186, and C208–C222. Residues N190 and N219 are each glycosylated (N-linked (GlcNAc...) asparagine).

It belongs to the fungal hydrophobin family. In terms of assembly, self-assembles to form functional amyloid fibrils called rodlets. Self-assembly into fibrillar rodlets occurs spontaneously at hydrophobic:hydrophilic interfaces and the rodlets further associate laterally to form amphipathic monolayers. Expressed in conidia and aerial hyphae.

The protein localises to the secreted. Its subcellular location is the cell wall. Its function is as follows. Aerial growth, conidiation, and dispersal of filamentous fungi in the environment rely upon a capability of their secreting small amphipathic proteins called hydrophobins (HPBs) with low sequence identity. Class I can self-assemble into an outermost layer of rodlet bundles on aerial cell surfaces, conferring cellular hydrophobicity that supports fungal growth, development and dispersal; whereas Class II form highly ordered films at water-air interfaces through intermolecular interactions but contribute nothing to the rodlet structure. Hcf-4 is a class I hydrophobin that is involved in the development and germination of conidia. The protein is Class I hydrophobin 4 of Passalora fulva (Tomato leaf mold).